A 102-amino-acid chain; its full sequence is Large ribosomal subunit protein bL21 (102 aa).

This sequence belongs to the bacterial ribosomal protein bL21 family. As to quaternary structure, part of the 50S ribosomal subunit. Contacts protein L20.

This protein binds to 23S rRNA in the presence of protein L20. The sequence is that of Large ribosomal subunit protein bL21 from Neisseria meningitidis serogroup A / serotype 4A (strain DSM 15465 / Z2491).